The chain runs to 81 residues: UPF0410 protein YwzA (81 aa).

The next 3 membrane-spanning stretches (helical) occupy residues methionine 1 to valine 21, glycine 27 to leucine 47, and glycine 56 to leucine 76.

Belongs to the UPF0410 family.

Its subcellular location is the cell membrane. The sequence is that of UPF0410 protein YwzA (ywzA) from Bacillus subtilis (strain 168).